We begin with the raw amino-acid sequence, 422 residues long: UDP-N-acetylglucosamine 1-carboxyvinyltransferase (422 aa).

Residue 22 to 23 coordinates phosphoenolpyruvate; sequence KN. Arg-92 serves as a coordination point for UDP-N-acetyl-alpha-D-glucosamine. Catalysis depends on Cys-116, which acts as the Proton donor. A 2-(S-cysteinyl)pyruvic acid O-phosphothioketal modification is found at Cys-116. UDP-N-acetyl-alpha-D-glucosamine is bound by residues 121 to 125, Asp-307, and Leu-329; that span reads RPVDL.

It belongs to the EPSP synthase family. MurA subfamily.

The protein localises to the cytoplasm. It carries out the reaction phosphoenolpyruvate + UDP-N-acetyl-alpha-D-glucosamine = UDP-N-acetyl-3-O-(1-carboxyvinyl)-alpha-D-glucosamine + phosphate. It participates in cell wall biogenesis; peptidoglycan biosynthesis. Its function is as follows. Cell wall formation. Adds enolpyruvyl to UDP-N-acetylglucosamine. The polypeptide is UDP-N-acetylglucosamine 1-carboxyvinyltransferase (Aliarcobacter butzleri (strain RM4018) (Arcobacter butzleri)).